Here is a 154-residue protein sequence, read N- to C-terminus: Egg-lysin (154 aa).

The signal sequence occupies residues 1 to 18 (MKLLVLCIFAMMATLAMS).

In terms of assembly, homodimer. In terms of tissue distribution, sperm.

Its function is as follows. Dissolves the egg vitelline layer nonenzymatically during fertilization. It creates a hole of about 3 mu-m in diameter through which the sperm pass. In Haliotis sorenseni (White abalone), this protein is Egg-lysin.